The primary structure comprises 495 residues: Cytoplasmic alpha-amylase (495 aa).

Positions 104 and 198 each coordinate Ca(2+). Aspartate 235 functions as the Nucleophile in the catalytic mechanism. Histidine 239 contacts Ca(2+). The Proton donor role is filled by glutamate 265.

This sequence belongs to the glycosyl hydrolase 13 family. Monomer. The cofactor is Ca(2+).

It localises to the cytoplasm. The enzyme catalyses Endohydrolysis of (1-&gt;4)-alpha-D-glucosidic linkages in polysaccharides containing three or more (1-&gt;4)-alpha-linked D-glucose units.. The sequence is that of Cytoplasmic alpha-amylase (amyA) from Escherichia coli (strain K12).